We begin with the raw amino-acid sequence, 326 residues long: Tetraacyldisaccharide 4'-kinase (326 aa).

Thr-55–Thr-62 serves as a coordination point for ATP.

Belongs to the LpxK family.

It carries out the reaction a lipid A disaccharide + ATP = a lipid IVA + ADP + H(+). It participates in glycolipid biosynthesis; lipid IV(A) biosynthesis; lipid IV(A) from (3R)-3-hydroxytetradecanoyl-[acyl-carrier-protein] and UDP-N-acetyl-alpha-D-glucosamine: step 6/6. Transfers the gamma-phosphate of ATP to the 4'-position of a tetraacyldisaccharide 1-phosphate intermediate (termed DS-1-P) to form tetraacyldisaccharide 1,4'-bis-phosphate (lipid IVA). The protein is Tetraacyldisaccharide 4'-kinase of Klebsiella pneumoniae subsp. pneumoniae (strain ATCC 700721 / MGH 78578).